A 530-amino-acid polypeptide reads, in one-letter code: Apolipoprotein N-acyltransferase (530 aa).

A run of 6 helical transmembrane segments spans residues 19–39 (LIAG…PGLL), 65–85 (WLAG…AFLV), 96–116 (FAVT…ALLY), 128–148 (LTFA…LTGF), 169–189 (LVGA…PAVW), and 197–217 (AATG…AIAL). Residues 232 to 485 (VQADIKQDLK…SGVIDAQIPG (254 aa)) form the CN hydrolase domain. The active-site Proton acceptor is the Glu274. Lys343 is an active-site residue. The active-site Nucleophile is the Cys396.

It belongs to the CN hydrolase family. Apolipoprotein N-acyltransferase subfamily.

It is found in the cell inner membrane. It carries out the reaction N-terminal S-1,2-diacyl-sn-glyceryl-L-cysteinyl-[lipoprotein] + a glycerophospholipid = N-acyl-S-1,2-diacyl-sn-glyceryl-L-cysteinyl-[lipoprotein] + a 2-acyl-sn-glycero-3-phospholipid + H(+). The protein operates within protein modification; lipoprotein biosynthesis (N-acyl transfer). Catalyzes the phospholipid dependent N-acylation of the N-terminal cysteine of apolipoprotein, the last step in lipoprotein maturation. The protein is Apolipoprotein N-acyltransferase of Caulobacter vibrioides (strain ATCC 19089 / CIP 103742 / CB 15) (Caulobacter crescentus).